The sequence spans 148 residues: MKIWVDADACPAVIKEILFKAARRTGVSMTLVANHLMRIPPSPHIHFMLVAAGLDAADNEIVKKLDAGDLVITADIPLAAQVIEKGGHALNPRGELYTVDNIRERLSMRDFMDSLRASGIDTGGPAALNQSDRQAFANRLDQFLTRHV.

Belongs to the UPF0178 family.

This chain is UPF0178 protein Pcar_2632, found in Syntrophotalea carbinolica (strain DSM 2380 / NBRC 103641 / GraBd1) (Pelobacter carbinolicus).